We begin with the raw amino-acid sequence, 158 residues long: 2-C-methyl-D-erythritol 2,4-cyclodiphosphate synthase (158 aa).

Positions 9 and 11 each coordinate a divalent metal cation. 4-CDP-2-C-methyl-D-erythritol 2-phosphate is bound by residues 9–11 (DVH) and 35–36 (HS). Histidine 43 serves as a coordination point for a divalent metal cation. 4-CDP-2-C-methyl-D-erythritol 2-phosphate-binding positions include 57–59 (DIG), 62–66 (FPDTD), 101–107 (AQRPKMA), 133–136 (TTTE), phenylalanine 140, and arginine 143.

Belongs to the IspF family. Homotrimer. Requires a divalent metal cation as cofactor.

It catalyses the reaction 4-CDP-2-C-methyl-D-erythritol 2-phosphate = 2-C-methyl-D-erythritol 2,4-cyclic diphosphate + CMP. It functions in the pathway isoprenoid biosynthesis; isopentenyl diphosphate biosynthesis via DXP pathway; isopentenyl diphosphate from 1-deoxy-D-xylulose 5-phosphate: step 4/6. Its function is as follows. Involved in the biosynthesis of isopentenyl diphosphate (IPP) and dimethylallyl diphosphate (DMAPP), two major building blocks of isoprenoid compounds. Catalyzes the conversion of 4-diphosphocytidyl-2-C-methyl-D-erythritol 2-phosphate (CDP-ME2P) to 2-C-methyl-D-erythritol 2,4-cyclodiphosphate (ME-CPP) with a corresponding release of cytidine 5-monophosphate (CMP). The sequence is that of 2-C-methyl-D-erythritol 2,4-cyclodiphosphate synthase from Lysinibacillus sphaericus (strain C3-41).